A 301-amino-acid chain; its full sequence is tRNA pseudouridine synthase B (301 aa).

Catalysis depends on Asp45, which acts as the Nucleophile.

This sequence belongs to the pseudouridine synthase TruB family. Type 1 subfamily.

The catalysed reaction is uridine(55) in tRNA = pseudouridine(55) in tRNA. Functionally, responsible for synthesis of pseudouridine from uracil-55 in the psi GC loop of transfer RNAs. This chain is tRNA pseudouridine synthase B, found in Streptomyces avermitilis (strain ATCC 31267 / DSM 46492 / JCM 5070 / NBRC 14893 / NCIMB 12804 / NRRL 8165 / MA-4680).